The primary structure comprises 726 residues: Probable cyclic nucleotide-gated ion channel 14 (726 aa).

Topologically, residues 1–86 are cytoplasmic; sequence MEFKRDNTVR…GDAVLQWNRV (86 aa). The helical transmembrane segment at 87–107 threads the bilayer; it reads FLFWCLVALYVDPLFFFLSSV. Topologically, residues 108 to 122 are extracellular; the sequence is KRIGRSSCMTTDLKL. The helical transmembrane segment at 123–143 threads the bilayer; that stretch reads GIVITFFRTLADLFYVLHIVI. At 144-177 the chain is on the cytoplasmic side; sequence KFRTAYVSRTSRVFGRGELVKDPKLIARRYLRSD. A helical membrane pass occupies residues 178–198; the sequence is FIVDLIACLPLPQIVSWFILP. Topologically, residues 199 to 211 are extracellular; the sequence is SIRSSHSDHTTNA. Residues 212-232 form a helical membrane-spanning segment; that stretch reads LVLIVLVQYIPRLYLIFPLSA. Topologically, residues 233 to 252 are cytoplasmic; it reads EIIKATGVVTTTAWAGAAYN. Residues 253-273 traverse the membrane as a helical segment; it reads LLQYMLASHILGSAWYLLSIE. Over 274-377 the chain is Extracellular; that stretch reads RQATCWKAEC…LSTSTSVLET (104 aa). A helical transmembrane segment spans residues 378–398; that stretch reads MFAILVAIFGLVLFALLIGNM. The Cytoplasmic segment spans residues 399–726; the sequence is QTYLQSITVR…PDEPDFSVDD (328 aa). A nucleoside 3',5'-cyclic phosphate-binding positions include 481 to 605 and E552; that span reads LFAQ…SKKL. A calmodulin-binding region spans residues 597-612; the sequence is FRRLHSKKLQHTFRYY. One can recognise an IQ domain in the interval 617-646; sequence RTWAACFVQVAWRRYKRKKLAKSLSLAESF. Residues 707-726 form a disordered region; sequence KDVEIPMLPKPDEPDFSVDD.

The protein belongs to the cyclic nucleotide-gated cation channel (TC 1.A.1.5) family. In terms of assembly, homotetramer or heterotetramer.

Its subcellular location is the cell membrane. Probable cyclic nucleotide-gated ion channel. The polypeptide is Probable cyclic nucleotide-gated ion channel 14 (CNGC14) (Arabidopsis thaliana (Mouse-ear cress)).